A 557-amino-acid chain; its full sequence is 2-isopropylmalate synthase (557 aa).

Residues 33 to 307 (PLWLSTDLRD…DPGLDFSDID (275 aa)) form the Pyruvate carboxyltransferase domain. The Mg(2+) site is built by D42, H246, H248, and N282. Residues 439–557 (AETPYALKGH…LGQQASIRAA (119 aa)) form a regulatory domain region.

Belongs to the alpha-IPM synthase/homocitrate synthase family. LeuA type 2 subfamily. Homodimer. Requires Mg(2+) as cofactor.

Its subcellular location is the cytoplasm. It carries out the reaction 3-methyl-2-oxobutanoate + acetyl-CoA + H2O = (2S)-2-isopropylmalate + CoA + H(+). The protein operates within amino-acid biosynthesis; L-leucine biosynthesis; L-leucine from 3-methyl-2-oxobutanoate: step 1/4. In terms of biological role, catalyzes the condensation of the acetyl group of acetyl-CoA with 3-methyl-2-oxobutanoate (2-ketoisovalerate) to form 3-carboxy-3-hydroxy-4-methylpentanoate (2-isopropylmalate). The chain is 2-isopropylmalate synthase from Azotobacter vinelandii (strain DJ / ATCC BAA-1303).